The primary structure comprises 137 residues: 1,4-dihydroxy-2-naphthoyl-CoA hydrolase (137 aa).

Residue aspartate 12 is part of the active site.

This sequence belongs to the 4-hydroxybenzoyl-CoA thioesterase family. DHNA-CoA hydrolase subfamily.

It catalyses the reaction 1,4-dihydroxy-2-naphthoyl-CoA + H2O = 1,4-dihydroxy-2-naphthoate + CoA + H(+). It functions in the pathway cofactor biosynthesis; phylloquinone biosynthesis. Its pathway is quinol/quinone metabolism; 1,4-dihydroxy-2-naphthoate biosynthesis; 1,4-dihydroxy-2-naphthoate from chorismate: step 7/7. In terms of biological role, catalyzes the hydrolysis of 1,4-dihydroxy-2-naphthoyl-CoA (DHNA-CoA) to 1,4-dihydroxy-2-naphthoate (DHNA), a reaction involved in phylloquinone (vitamin K1) biosynthesis. The sequence is that of 1,4-dihydroxy-2-naphthoyl-CoA hydrolase from Acaryochloris marina (strain MBIC 11017).